The following is a 304-amino-acid chain: NADH-cytochrome b5 reductase 2 (304 aa).

The chain crosses the membrane as a helical span at residues 6-26 (GTPVVVAVAAVAATVLLLLLL). An FAD-binding FR-type domain is found at 43–155 (QAKYPLPLVG…RGPNGLLVYK (113 aa)). FAD contacts are provided by residues 135–165 (DSMK…IKPD) and 174–209 (FAKH…KCYL).

It belongs to the flavoprotein pyridine nucleotide cytochrome reductase family. Requires FAD as cofactor.

Its subcellular location is the membrane. The enzyme catalyses 2 Fe(III)-[cytochrome b5] + NADH = 2 Fe(II)-[cytochrome b5] + NAD(+) + H(+). NADH-cytochrome b5 reductases are involved in desaturation and elongation of fatty acids, cholesterol biosynthesis and drug metabolism. The sequence is that of NADH-cytochrome b5 reductase 2 (CYB5R2) from Gallus gallus (Chicken).